A 235-amino-acid polypeptide reads, in one-letter code: Large ribosomal subunit protein uL1 (235 aa).

The protein belongs to the universal ribosomal protein uL1 family. As to quaternary structure, part of the 50S ribosomal subunit.

In terms of biological role, binds directly to 23S rRNA. The L1 stalk is quite mobile in the ribosome, and is involved in E site tRNA release. Its function is as follows. Protein L1 is also a translational repressor protein, it controls the translation of the L11 operon by binding to its mRNA. This chain is Large ribosomal subunit protein uL1, found in Corynebacterium diphtheriae (strain ATCC 700971 / NCTC 13129 / Biotype gravis).